A 345-amino-acid chain; its full sequence is NADPH-dependent oxidoreductase 2-alkenal reductase (345 aa).

Residues 52 to 53, 163 to 169, Gly188, Lys192, Tyr208, Asn232, Cys254, Tyr260, 284 to 286, Phe330, and 334 to 336 contribute to the NADP(+) site; these read PY, AASGAVG, FVV, and NVG. A substrate-binding site is contributed by Tyr53. Tyr260 lines the substrate pocket.

Belongs to the NADP-dependent oxidoreductase L4BD family. As to quaternary structure, homodimer. Expressed in leaves.

The protein resides in the cytoplasm. Its subcellular location is the nucleus. It localises to the nucleoplasm. It carries out the reaction an n-alkanal + NAD(+) = an alk-2-enal + NADH + H(+). The enzyme catalyses an n-alkanal + NADP(+) = an alk-2-enal + NADPH + H(+). With respect to regulation, inhibited by N-ethylmaleimide and p-chloromercuribenzoic acid. Its function is as follows. Involved in the detoxification of reactive carbonyls. Acts on lipid peroxide-derived reactive aldehydes. Specific to a double bond activated by an adjacent carbonyl group. Can use both quinones and diamide as substrates, but not menadione, ferricyanide or phylloquinone. Can use 4-hydroxy-(2E)-nonenal (HNE), 4-hydroxy-(2E)-hexenal (HHE), (2E)-nonenal, (2E)-hexenal, (2E)-pentenal, propenal (acrolein), 3-buten-2-one and 3-penten-2-one, but not (R)-(-)-carvone, n-nonanal, n-hexanal, (3Z)-hexanal, cyclohex-2-en-1-one or 12-oxo phytodienoic acid (OPDA) as electron acceptors. Catalyzes the reduction of the alpha,beta-unsaturated bond of 2-alkenals, of lipid peroxide-derived oxenes 9-oxo-10(E),12(Z)-octadecadienoic acid (9-KODE) and 13-oxo-9(Z),11(E)-octadecadienoic acid (13-KODE), as well as 4-oxo-(2E)-nonenal and 4-hydroxynonenal. Can use 12-oxo-10(E) dodecanoate (traumatin), trans-1,3 diphenyl-2-propenone, trans-1,4-diphenyl-2-butene-1,4-dione, 9-oxo-12,13-epoxy-(10E)-octadecenoic acid (trans-EKODE-1b) and 9,13-dihydroxy-10-oxo-11-octadecenoic acid as substrates. Catalyzes the reduction of the 7-8 double bond of phenylpropanal substrates, such as p-coumaryl aldehyde and coniferyl aldehyde (in vitro). Has activity towards toxic substrates, such as 4-hydroxy-(2E)-nonenal (in vitro). May play a distinct role in plant antioxidant defense and is possibly involved in NAD(P)/NAD(P)H homeostasis. This Arabidopsis thaliana (Mouse-ear cress) protein is NADPH-dependent oxidoreductase 2-alkenal reductase.